Reading from the N-terminus, the 936-residue chain is Isoleucine--tRNA ligase (936 aa).

The 'HIGH' region signature appears at 58–68 (PYANGRAHLGT). Glu561 is an L-isoleucyl-5'-AMP binding site. The short motif at 602 to 606 (KMSKS) is the 'KMSKS' region element. Lys605 is an ATP binding site. Residues Cys899, Cys902, Cys919, and Cys922 each coordinate Zn(2+).

Belongs to the class-I aminoacyl-tRNA synthetase family. IleS type 1 subfamily. As to quaternary structure, monomer. It depends on Zn(2+) as a cofactor.

It localises to the cytoplasm. It carries out the reaction tRNA(Ile) + L-isoleucine + ATP = L-isoleucyl-tRNA(Ile) + AMP + diphosphate. In terms of biological role, catalyzes the attachment of isoleucine to tRNA(Ile). As IleRS can inadvertently accommodate and process structurally similar amino acids such as valine, to avoid such errors it has two additional distinct tRNA(Ile)-dependent editing activities. One activity is designated as 'pretransfer' editing and involves the hydrolysis of activated Val-AMP. The other activity is designated 'posttransfer' editing and involves deacylation of mischarged Val-tRNA(Ile). The polypeptide is Isoleucine--tRNA ligase (Coxiella burnetii (strain Dugway 5J108-111)).